Consider the following 107-residue polypeptide: Putative double-stranded DNA mimic protein NTHI1680 (107 aa).

The protein belongs to the putative dsDNA mimic protein family.

In terms of biological role, may act as a double-stranded DNA (dsDNA) mimic. Probably regulates the activity of a dsDNA-binding protein. This Haemophilus influenzae (strain 86-028NP) protein is Putative double-stranded DNA mimic protein NTHI1680.